The primary structure comprises 310 residues: GMP synthase [glutamine-hydrolyzing] subunit B (310 aa).

The region spanning 1–187 (MSTSSYIDQI…LGLRTDLQPF (187 aa)) is the GMPS ATP-PPase domain. 27–33 (SGGQDSS) contacts ATP.

Heterodimer composed of a glutamine amidotransferase subunit (A) and a GMP-binding subunit (B).

It catalyses the reaction XMP + L-glutamine + ATP + H2O = GMP + L-glutamate + AMP + diphosphate + 2 H(+). It participates in purine metabolism; GMP biosynthesis; GMP from XMP (L-Gln route): step 1/1. In terms of biological role, catalyzes the synthesis of GMP from XMP. The chain is GMP synthase [glutamine-hydrolyzing] subunit B (guaAB) from Thermoplasma acidophilum (strain ATCC 25905 / DSM 1728 / JCM 9062 / NBRC 15155 / AMRC-C165).